Consider the following 21-residue polypeptide: Granule-bound starch synthase 1 (21 aa).

The protein belongs to the glycosyltransferase 1 family. Bacterial/plant glycogen synthase subfamily.

It localises to the plastid. It is found in the chloroplast. The protein localises to the amyloplast. It carries out the reaction an NDP-alpha-D-glucose + [(1-&gt;4)-alpha-D-glucosyl](n) = [(1-&gt;4)-alpha-D-glucosyl](n+1) + a ribonucleoside 5'-diphosphate + H(+). The protein operates within glycan biosynthesis; starch biosynthesis. This chain is Granule-bound starch synthase 1, found in Secale cereale (Rye).